A 408-amino-acid chain; its full sequence is GTPase HflX (408 aa).

The Hflx-type G domain occupies 198-361 (PRVSLVGYTN…LIVREMERHY (164 aa)). GTP contacts are provided by residues 204–211 (GYTNAGKS), 229–233 (FVTLD), 251–254 (DTVG), 317–320 (NKAD), and 339–341 (SAK). Positions 211 and 231 each coordinate Mg(2+).

This sequence belongs to the TRAFAC class OBG-HflX-like GTPase superfamily. HflX GTPase family. Monomer. Associates with the 50S ribosomal subunit. It depends on Mg(2+) as a cofactor.

The protein localises to the cytoplasm. Functionally, GTPase that associates with the 50S ribosomal subunit and may have a role during protein synthesis or ribosome biogenesis. This Spirochaeta thermophila (strain ATCC 49972 / DSM 6192 / RI 19.B1) protein is GTPase HflX.